The following is a 1346-amino-acid chain: G-protein coupled receptor-associated sorting protein 1 (1346 aa).

3 disordered regions span residues Met1–Glu101, Thr144–Pro177, and Ala192–Thr258. Low complexity predominate over residues Glu21 to Val36. The segment covering Phe211–Met226 has biased composition (basic residues). Position 295 is a phosphoserine (Ser295). Disordered regions lie at residues Glu311–Glu399 and Val461–Met485. Basic residues predominate over residues Arg316–Ala333. Composition is skewed to basic and acidic residues over residues Asp347–Ala361 and Lys370–Glu399. A compositionally biased stretch (polar residues) spans Val461–Ser484. 2 positions are modified to phosphoserine: Ser619 and Ser626. At Thr860 the chain carries Phosphothreonine. Ser862 is subject to Phosphoserine. A disordered region spans residues Ala984–Trp1004. Positions Ser990–Ser1003 are enriched in basic and acidic residues.

This sequence belongs to the GPRASP family. Interacts with cytoplasmic tails of a variety of G-protein coupled receptors such as delta opioid receptor/OPRD1, beta-2 adrenergic receptor/ADRB2 and D4 dopamine receptor/DRD4. Interacts with BECN2; the interaction is direct and with D2 dopamine receptor/DRD2. Interacts with PER1. In terms of tissue distribution, expressed in the brain.

The protein localises to the cytoplasm. Functionally, modulates lysosomal sorting and functional down-regulation of a variety of G-protein coupled receptors. Targets receptors for degradation in lysosomes via its interaction with BECN2. In Rattus norvegicus (Rat), this protein is G-protein coupled receptor-associated sorting protein 1 (Gprasp1).